A 274-amino-acid polypeptide reads, in one-letter code: 2,3,4,5-tetrahydropyridine-2,6-dicarboxylate N-succinyltransferase (274 aa).

The substrate site is built by Arg103 and Asp140.

It belongs to the transferase hexapeptide repeat family. In terms of assembly, homotrimer.

The protein localises to the cytoplasm. It carries out the reaction (S)-2,3,4,5-tetrahydrodipicolinate + succinyl-CoA + H2O = (S)-2-succinylamino-6-oxoheptanedioate + CoA. Its pathway is amino-acid biosynthesis; L-lysine biosynthesis via DAP pathway; LL-2,6-diaminopimelate from (S)-tetrahydrodipicolinate (succinylase route): step 1/3. This chain is 2,3,4,5-tetrahydropyridine-2,6-dicarboxylate N-succinyltransferase, found in Actinobacillus pleuropneumoniae serotype 5b (strain L20).